Here is a 326-residue protein sequence, read N- to C-terminus: Phosphate acyltransferase (326 aa).

The protein belongs to the PlsX family. In terms of assembly, homodimer. Probably interacts with PlsY.

The protein resides in the cytoplasm. The enzyme catalyses a fatty acyl-[ACP] + phosphate = an acyl phosphate + holo-[ACP]. It functions in the pathway lipid metabolism; phospholipid metabolism. In terms of biological role, catalyzes the reversible formation of acyl-phosphate (acyl-PO(4)) from acyl-[acyl-carrier-protein] (acyl-ACP). This enzyme utilizes acyl-ACP as fatty acyl donor, but not acyl-CoA. The sequence is that of Phosphate acyltransferase from Thermus thermophilus (strain ATCC BAA-163 / DSM 7039 / HB27).